Here is a 615-residue protein sequence, read N- to C-terminus: Zinc finger protein 653 (615 aa).

4 disordered regions span residues 1 to 48, 95 to 117, 176 to 236, and 401 to 432; these read MAER…ARRR, RSGR…KRRR, PLSD…SSGL, and EEKE…ELDG. Residues 107 to 118 carry the Nuclear localization signal motif; sequence PKKPKRKKRRRR. The span at 108–117 shows a compositional bias: basic residues; that stretch reads KKPKRKKRRR. Low complexity predominate over residues 193-205; it reads AGSSDSSSSGSAS. Residues 226-236 show a composition bias toward polar residues; that stretch reads TPTSPVGSSGL. Positions 419–432 are enriched in acidic residues; the sequence is AEPEAEADGEELDG. A Nuclear localization signal motif is present at residues 445 to 451; that stretch reads EPEKRRR. 5 C2H2-type zinc fingers span residues 467–492, 498–522, 528–550, 556–578, and 586–609; these read FHCP…NLVH, KVCP…MIIH, FTCE…RRTH, LQCE…MKKH, and FTCD…LKSH.

Belongs to the krueppel C2H2-type zinc-finger protein family. Interacts with NR5A1. Highly expressed in testis, cerebellum, temporal lobe, hippocampus and the adrenal gland. Moderately expressed in spleen, uterus, thymus, pancreas, kidney, stomach and rectum.

The protein resides in the nucleus. In terms of biological role, transcriptional repressor. May repress NR5A1, PPARG, NR1H3, NR4A2, ESR1 and NR3C1 transcriptional activity. This chain is Zinc finger protein 653 (ZNF653), found in Homo sapiens (Human).